An 83-amino-acid polypeptide reads, in one-letter code: Mu-theraphotoxin-Hhn2n (83 aa).

Residues 1 to 21 (MKASMYLALAGLVLLFVVGYA) form the signal peptide. Residues 22–48 (SESEEKEFPRELLSKIFAVDDFKGEER) constitute a propeptide that is removed on maturation. 3 disulfides stabilise this stretch: Cys-50–Cys-65, Cys-57–Cys-70, and Cys-64–Cys-77. A Leucine amide modification is found at Leu-81.

Belongs to the neurotoxin 10 (Hwtx-1) family. 15 (Hntx-3) subfamily. As to quaternary structure, monomer. In terms of tissue distribution, expressed by the venom gland.

It localises to the secreted. In terms of biological role, lethal neurotoxin. Selectively blocks tetrodotoxin-sensitive voltage-gated sodium channels (Nav). Does not affect tetrodotoxin-resistant voltage-gated sodium channels or calcium channels. The protein is Mu-theraphotoxin-Hhn2n of Cyriopagopus hainanus (Chinese bird spider).